We begin with the raw amino-acid sequence, 70 residues long: DNA gyrase inhibitor YacG (70 aa).

Over residues 1 to 15 (MPEDKKAAAKVEPLR) the composition is skewed to basic and acidic residues. Residues 1-22 (MPEDKKAAAKVEPLRKTRPCPE) are disordered. Zn(2+)-binding residues include Cys-20, Cys-23, Cys-35, and Cys-39.

This sequence belongs to the DNA gyrase inhibitor YacG family. In terms of assembly, interacts with GyrB. The cofactor is Zn(2+).

Its function is as follows. Inhibits all the catalytic activities of DNA gyrase by preventing its interaction with DNA. Acts by binding directly to the C-terminal domain of GyrB, which probably disrupts DNA binding by the gyrase. In Rhizobium johnstonii (strain DSM 114642 / LMG 32736 / 3841) (Rhizobium leguminosarum bv. viciae), this protein is DNA gyrase inhibitor YacG.